We begin with the raw amino-acid sequence, 711 residues long: MSSVQSQQEQLSQSDPSPSPNSCSSFELIDMDAGSLYEPVSPHWFYCKIIDSKETWIPFNSEDSQQLEEAYSSGKGCNGRVVPTDGGRYDVHLGERMRYAVYWDELASEVRRCTWFYKGDKDNKYVPYSESFSQVLEETYMLAVTLDEWKKKLESPNREIIILHNPKLMVHYQPVAGSDDWGSTPTEQGRPRTVKRGVENISVDIHCGEPLQIDHLVFVVHGIGPACDLRFRSIVQCVNDFRSVSLNLLQTHFKKAQENQQIGRVEFLPVNWHSPLHSTGVDVDLQRITLPSINRLRHFTNDTILDVFFYNSPTYCQTIVDTVASEMNRIYTLFLQRNPDFKGGVSIAGHSLGSLILFDILTNQKDSLGDIDSEKDSLNIVMDQGDTPTLEEDLKKLQLSEFFDIFEKEKVDKEALALCTDRDLQEIGIPLGPRKKILNYFSTRKNSMGIKRPAPQPASGANIPKESEFCSSSNTRNGDYLDVGIGQVSVKYPRLIYKPEIFFAFGSPIGMFLTVRGLKRIDPNYRFPTCKGFFNIYHPFDPVAYRIEPMVVPGVEFEPMLIPHHKGRKRMHLELREGLTRMSMDLKNNLLGSLRMAWKSFTRAPYPALQASETPEETEAEPESTSEKPSDVNTEETSVAVKEEVLPINVGMLNGGQRIDYVLQEKPIESFNEYLFALQSHLCYWESEDTVLLVLKEIYQTQGIFLDQPLQ.

Positions 1 to 24 (MSSVQSQQEQLSQSDPSPSPNSCS) are disordered. A WWE domain is found at 30–112 (DMDAGSLYEP…WDELASEVRR (83 aa)). The Nucleophile role is filled by S351. The 64-residue stretch at 385–448 (GDTPTLEEDL…NYFSTRKNSM (64 aa)) folds into the SAM domain. The residue at position 447 (S447) is a Phosphoserine. 2 disordered regions span residues 449–470 (GIKR…SEFC) and 609–638 (LQAS…EETS). The DDHD domain maps to 495 to 700 (LIYKPEIFFA…VLLVLKEIYQ (206 aa)). A compositionally biased stretch (acidic residues) spans 614 to 624 (TPEETEAEPES).

This sequence belongs to the PA-PLA1 family. Forms homooligomers and, to a much smaller extent, heterooligomers with DDHD1. In terms of tissue distribution, widely expressed (at protein level).

Its subcellular location is the cytoplasm. The protein localises to the cytosol. It is found in the endoplasmic reticulum-Golgi intermediate compartment. It localises to the golgi apparatus. The protein resides in the cis-Golgi network. The enzyme catalyses a triacylglycerol + H2O = a diacylglycerol + a fatty acid + H(+). It catalyses the reaction a diacylglycerol + H2O = a monoacylglycerol + a fatty acid + H(+). It carries out the reaction a 1,3-diacylglycerol + H2O = a 1-acylglycerol + a fatty acid + H(+). The catalysed reaction is a 1-acylglycerol + H2O = glycerol + a fatty acid + H(+). The enzyme catalyses 1,2,3-tri-(9Z-octadecenoyl)-glycerol + H2O = di-(9Z)-octadecenoylglycerol + (9Z)-octadecenoate + H(+). It catalyses the reaction di-(9Z)-octadecenoylglycerol + H2O = (9Z-octadecenoyl)-glycerol + (9Z)-octadecenoate + H(+). It carries out the reaction 1,3-di-(9Z-octadecenoyl)-glycerol + H2O = 1-(9Z-octadecenoyl)-glycerol + (9Z)-octadecenoate + H(+). The catalysed reaction is trihexadecanoylglycerol + H2O = dihexadecanoylglycerol + hexadecanoate + H(+). The enzyme catalyses 1,2-di-(9Z-octadecenoyl)-sn-glycero-3-phosphocholine + H2O = (9Z-octadecenoyl)-sn-glycero-3-phosphocholine + (9Z)-octadecenoate + H(+). It catalyses the reaction 1-(9Z-octadecenoyl)-glycerol + H2O = glycerol + (9Z)-octadecenoate + H(+). It carries out the reaction 1,2-di-(9Z-octadecenoyl)-sn-glycero-3-phosphate + H2O = 2-(9Z-octadecenoyl)-sn-glycero-3-phosphate + (9Z)-octadecenoate + H(+). The catalysed reaction is 1-hexadecanoyl-2-(9Z-octadecenoyl)-sn-glycero-3-phosphate + H2O = 2-(9Z-octadecenoyl)-sn-glycero-3-phosphate + hexadecanoate + H(+). The enzyme catalyses 1-hexadecanoyl-2-(9Z-octadecenoyl)-sn-glycero-3-phosphoethanolamine + H2O = 2-(9Z-octadecenoyl)-sn-glycero-3-phosphoethanolamine + hexadecanoate + H(+). It catalyses the reaction 1-hexadecanoyl-2-(9Z-octadecenoyl)-sn-glycero-3-phospho-L-serine + H2O = 2-(9Z-octadecenoyl)-sn-glycero-3-phospho-L-serine + hexadecanoate + H(+). It carries out the reaction 1-hexadecanoyl-2-(9Z-octadecenoyl)-sn-glycero-3-phosphocholine + H2O = 2-(9Z-octadecenoyl)-sn-glycero-3-phosphocholine + hexadecanoate + H(+). Diacylglycerol (DAG) and triacylglycerol (TAG) lipase required for proper lipid homeostasis in the central nervous system. It cooperates with PNPLA2/ATGL in neuronal TAG catabolism and hydrolyzes sn-1,3 DAG downstream of PNPLA2/ATGL. In vitro, it also acts as a phospholipase that hydrolyzes preferentially phosphatidic acids, including 1,2-dioleoyl-sn-phosphatidic acid, phosphatidylcholine and phosphatidylethanolamine. Specifically binds to phosphatidylinositol 3-phosphate (PI(3)P), phosphatidylinositol 4-phosphate (PI(4)P), phosphatidylinositol 5-phosphate (PI(5)P) and possibly phosphatidylinositol 4,5-bisphosphate (PI(4,5)P2). May be involved in the maintenance of the endoplasmic reticulum and/or Golgi structures. May regulate the transport between Golgi apparatus and plasma membrane. The protein is Triacylglycerol hydrolase DDHD2 of Homo sapiens (Human).